The sequence spans 442 residues: 26S proteasome regulatory subunit 6A (442 aa).

The residue at position 12 (Ser-12) is a Phosphoserine. Gly-230–Thr-237 contributes to the ATP binding site. Phosphoserine is present on Ser-379.

This sequence belongs to the AAA ATPase family. In terms of assembly, component of the 19S proteasome regulatory particle complex. The 26S proteasome consists of a 20S core particle (CP) and two 19S regulatory subunits (RP). The regulatory particle is made of a lid composed of 9 subunits, a base containing 6 ATPases including PSMC3 and few additional components. Interacts with PAAF1.

The protein resides in the cytoplasm. It localises to the nucleus. Its function is as follows. Component of the 26S proteasome, a multiprotein complex involved in the ATP-dependent degradation of ubiquitinated proteins. This complex plays a key role in the maintenance of protein homeostasis by removing misfolded or damaged proteins, which could impair cellular functions, and by removing proteins whose functions are no longer required. Therefore, the proteasome participates in numerous cellular processes, including cell cycle progression, apoptosis, or DNA damage repair. PSMC3 belongs to the heterohexameric ring of AAA (ATPases associated with diverse cellular activities) proteins that unfolds ubiquitinated target proteins that are concurrently translocated into a proteolytic chamber and degraded into peptides. The polypeptide is 26S proteasome regulatory subunit 6A (Psmc3) (Mus musculus (Mouse)).